Consider the following 493-residue polypeptide: Glutamyl-tRNA(Gln) amidotransferase subunit A (493 aa).

Active-site charge relay system residues include Lys-78 and Ser-158. Catalysis depends on Ser-182, which acts as the Acyl-ester intermediate.

The protein belongs to the amidase family. GatA subfamily. As to quaternary structure, heterotrimer of A, B and C subunits.

The enzyme catalyses L-glutamyl-tRNA(Gln) + L-glutamine + ATP + H2O = L-glutaminyl-tRNA(Gln) + L-glutamate + ADP + phosphate + H(+). Allows the formation of correctly charged Gln-tRNA(Gln) through the transamidation of misacylated Glu-tRNA(Gln) in organisms which lack glutaminyl-tRNA synthetase. The reaction takes place in the presence of glutamine and ATP through an activated gamma-phospho-Glu-tRNA(Gln). In Rickettsia typhi (strain ATCC VR-144 / Wilmington), this protein is Glutamyl-tRNA(Gln) amidotransferase subunit A.